We begin with the raw amino-acid sequence, 268 residues long: Trans-aconitate 2-methyltransferase (268 aa).

It belongs to the methyltransferase superfamily. Tam family.

The protein resides in the cytoplasm. The enzyme catalyses trans-aconitate + S-adenosyl-L-methionine = (E)-3-(methoxycarbonyl)pent-2-enedioate + S-adenosyl-L-homocysteine. Functionally, catalyzes the S-adenosylmethionine monomethyl esterification of trans-aconitate. This Delftia acidovorans (strain DSM 14801 / SPH-1) protein is Trans-aconitate 2-methyltransferase.